Reading from the N-terminus, the 375-residue chain is MQLQFRSWMLAALTLLVVFLIFADISEIEEEIGNSGGRGTIRSAVNSLHSKSNRAEVVINGSSPPAVADRSNESLKHNIQPASSKWRHNQTLSLRIRKQILKFLDAEKDISVLKGTLKPGDIIHYIFDRDSTMNVSQNLYELLPRTSPLKNKHFQTCAIVGNSGVLLNSGCGQEIDTHSFVIRCNLAPVQEYARDVGLKTDLVTMNPSVIQRAFEDLVNATWREKLLQRLHGLNGSILWIPAFMARGGKERVEWVNALILKHHVNVRTAYPSLRLLHAVRGYWLTNKVHIKRPTTGLLMYTLATRFCNQIYLYGFWPFPLDQNQNPVKYHYYDSLKYGYTSQASPHTMPLEFKALKSLHEQGALKLTVGQCDGAT.

Topologically, residues 1–6 are cytoplasmic; the sequence is MQLQFR. A helical; Signal-anchor for type II membrane protein transmembrane segment spans residues 7 to 23; it reads SWMLAALTLLVVFLIFA. At 24 to 375 the chain is on the lumenal side; the sequence is DISEIEEEIG…LTVGQCDGAT (352 aa). Asn60, Asn72, Asn89, and Asn134 each carry an N-linked (GlcNAc...) asparagine glycan. Intrachain disulfides connect Cys157–Cys307 and Cys171–Cys371. CMP-N-acetyl-beta-neuraminate contacts are provided by Asn162 and Asn185. 2 N-linked (GlcNAc...) asparagine glycosylation sites follow: Asn219 and Asn234. Positions 294, 295, 296, 316, 329, and 330 each coordinate CMP-N-acetyl-beta-neuraminate. Catalysis depends on His346, which acts as the Proton donor/acceptor.

It belongs to the glycosyltransferase 29 family. In terms of processing, autopolysialylated. Autopolysialylation is not a prerequisite for the polysialylation acitity, but enhances the polysialylation acitity.

It is found in the golgi apparatus membrane. The protein resides in the secreted. It localises to the cell membrane. It carries out the reaction [N-acetyl-alpha-D-neuraminosyl-(2-&gt;8)](n) + CMP-N-acetyl-beta-neuraminate = [N-acetyl-alpha-D-neuraminosyl-(2-&gt;8)](n+1) + CMP + H(+). The protein operates within protein modification; protein glycosylation. Catalyzes the transfer of a sialic acid from a CMP-linked sialic acid donor onto a terminal alpha-2,3-, alpha-2,6-, or alpha-2,8-linked sialic acid of an N-linked glycan acceptor through alpha-2,8-linkages. Therefore, participates in polysialic acid synthesis on various sialylated N-acetyllactosaminyl oligosaccharides (alpha-2,3-, alpha-2,6-, or alpha-2,8-linked sialic acid), including NCAM1, NCAM1 N-glycans, FETUB N-glycans, and to a lesser extent sialylparagloboside (SPG) and AHSG, which does not require the initial addition of an alpha 2,8-sialic acid. However, does not exhibit sialic acid-polymerase activity. Catalyzes polysialic acid synthesis in the hippocampal on NCAM1 and supports neurite outgrowth. ST8SIA2-mediated polysialylation influences on oligodendrocyte differentiation and may promote the integrity of myelin and axons. This chain is Alpha-2,8-sialyltransferase 8B, found in Mus musculus (Mouse).